Consider the following 925-residue polypeptide: ETO1-like protein 2 (925 aa).

One can recognise a BTB domain in the interval Ser207–Val307. The stretch at Ala409 to Tyr442 is one TPR 1 repeat. Residues Lys509–Gln533 are a coiled coil. 6 TPR repeats span residues Pro538–Tyr571, Ala664–Phe697, Gly738–Arg771, Arg773–Lys803, Thr834–Leu867, and Thr869–His900.

It belongs to the ETO1 family. Interacts with the C-terminal domain of ACS5. Constitutively expressed in green and etiolated seedlings.

It participates in protein modification; protein ubiquitination. Its function is as follows. Potential regulator of the ethylene pathway, which acts by regulating the stability of 1-aminocyclopropane-1-carboxylate synthase (ACS) enzymes. May act as a substrate-specific adapter that connects ACS enzymes, such as ACS5, to ubiquitin ligase complexes, leading to proteasomal degradation of ACS enzymes. In Arabidopsis thaliana (Mouse-ear cress), this protein is ETO1-like protein 2 (EOL2).